We begin with the raw amino-acid sequence, 602 residues long: Elongation factor 4 (602 aa).

Positions 7–189 (RKIRNFSIIA…AIVKNIPPPT (183 aa)) constitute a tr-type G domain. GTP contacts are provided by residues 19 to 24 (DHGKST) and 136 to 139 (NKID).

It belongs to the TRAFAC class translation factor GTPase superfamily. Classic translation factor GTPase family. LepA subfamily.

It is found in the cell membrane. It carries out the reaction GTP + H2O = GDP + phosphate + H(+). Its function is as follows. Required for accurate and efficient protein synthesis under certain stress conditions. May act as a fidelity factor of the translation reaction, by catalyzing a one-codon backward translocation of tRNAs on improperly translocated ribosomes. Back-translocation proceeds from a post-translocation (POST) complex to a pre-translocation (PRE) complex, thus giving elongation factor G a second chance to translocate the tRNAs correctly. Binds to ribosomes in a GTP-dependent manner. The sequence is that of Elongation factor 4 from Alkaliphilus metalliredigens (strain QYMF).